Consider the following 130-residue polypeptide: Holo-[acyl-carrier-protein] synthase (130 aa).

Mg(2+)-binding residues include Asp9 and Glu58.

This sequence belongs to the P-Pant transferase superfamily. AcpS family. Mg(2+) serves as cofactor.

It localises to the cytoplasm. It catalyses the reaction apo-[ACP] + CoA = holo-[ACP] + adenosine 3',5'-bisphosphate + H(+). Its function is as follows. Transfers the 4'-phosphopantetheine moiety from coenzyme A to a Ser of acyl-carrier-protein. The sequence is that of Holo-[acyl-carrier-protein] synthase from Mycolicibacterium smegmatis (strain ATCC 700084 / mc(2)155) (Mycobacterium smegmatis).